We begin with the raw amino-acid sequence, 569 residues long: Proline--tRNA ligase (569 aa).

It belongs to the class-II aminoacyl-tRNA synthetase family. ProS type 1 subfamily. As to quaternary structure, homodimer.

Its subcellular location is the cytoplasm. The catalysed reaction is tRNA(Pro) + L-proline + ATP = L-prolyl-tRNA(Pro) + AMP + diphosphate. In terms of biological role, catalyzes the attachment of proline to tRNA(Pro) in a two-step reaction: proline is first activated by ATP to form Pro-AMP and then transferred to the acceptor end of tRNA(Pro). As ProRS can inadvertently accommodate and process non-cognate amino acids such as alanine and cysteine, to avoid such errors it has two additional distinct editing activities against alanine. One activity is designated as 'pretransfer' editing and involves the tRNA(Pro)-independent hydrolysis of activated Ala-AMP. The other activity is designated 'posttransfer' editing and involves deacylation of mischarged Ala-tRNA(Pro). The misacylated Cys-tRNA(Pro) is not edited by ProRS. The polypeptide is Proline--tRNA ligase (Dehalococcoides mccartyi (strain ATCC BAA-2100 / JCM 16839 / KCTC 5957 / BAV1)).